A 295-amino-acid polypeptide reads, in one-letter code: Protease HtpX (295 aa).

The next 2 helical transmembrane spans lie at 4–24 (ILLFLATNLAVVLIASITLSL) and 42–62 (QLLVFCAVFGFAGSLFSLFIS). H147 lines the Zn(2+) pocket. E148 is a catalytic residue. H151 contacts Zn(2+). Transmembrane regions (helical) follow at residues 158 to 178 (VTLALVQGVVNTFVMFFARII) and 195 to 215 (IAYFVATIFAEVVLGFLASAI). A Zn(2+)-binding site is contributed by E224.

The protein belongs to the peptidase M48B family. Requires Zn(2+) as cofactor.

Its subcellular location is the cell inner membrane. The chain is Protease HtpX from Pseudomonas fluorescens (strain SBW25).